The primary structure comprises 139 residues: Putative pre-16S rRNA nuclease (139 aa).

The protein belongs to the YqgF nuclease family.

Its subcellular location is the cytoplasm. Functionally, could be a nuclease involved in processing of the 5'-end of pre-16S rRNA. This is Putative pre-16S rRNA nuclease from Bacillus licheniformis (strain ATCC 14580 / DSM 13 / JCM 2505 / CCUG 7422 / NBRC 12200 / NCIMB 9375 / NCTC 10341 / NRRL NRS-1264 / Gibson 46).